Here is a 115-residue protein sequence, read N- to C-terminus: Probable non-functional T cell receptor beta variable 23-1 (115 aa).

The signal sequence occupies residues 1 to 21; sequence MGTRLLGCAALCLLAADSFHA. The region spanning 22–115 is the Ig-like domain; the sequence is KVTQTPGHLV…TALYLCASSQ (94 aa). A disulfide bond links cysteine 42 and cysteine 111.

In terms of assembly, alpha-beta TR is a heterodimer composed of an alpha and beta chain; disulfide-linked. The alpha-beta TR is associated with the transmembrane signaling CD3 coreceptor proteins to form the TR-CD3 (TcR or TCR). The assembly of alpha-beta TR heterodimers with CD3 occurs in the endoplasmic reticulum where a single alpha-beta TR heterodimer associates with one CD3D-CD3E heterodimer, one CD3G-CD3E heterodimer and one CD247 homodimer forming a stable octameric structure. CD3D-CD3E and CD3G-CD3E heterodimers preferentially associate with TR alpha and TR beta chains, respectively. The association of the CD247 homodimer is the last step of TcR assembly in the endoplasmic reticulum and is required for transport to the cell surface.

It is found in the cell membrane. In terms of biological role, probable non-functional open reading frame (ORF) of V region of the variable domain of T cell receptor (TR) beta chain. Non-functional ORF generally cannot participate in the synthesis of a productive T cell receptor (TR) chain due to altered V-(D)-J or switch recombination and/or splicing site (at mRNA level) and/or conserved amino acid change (protein level). Alpha-beta T cell receptors are antigen specific receptors which are essential to the immune response and are present on the cell surface of T lymphocytes. Recognize peptide-major histocompatibility (MH) (pMH) complexes that are displayed by antigen presenting cells (APC), a prerequisite for efficient T cell adaptive immunity against pathogens. Binding of alpha-beta TR to pMH complex initiates TR-CD3 clustering on the cell surface and intracellular activation of LCK that phosphorylates the ITAM motifs of CD3G, CD3D, CD3E and CD247 enabling the recruitment of ZAP70. In turn ZAP70 phosphorylates LAT, which recruits numerous signaling molecules to form the LAT signalosome. The LAT signalosome propagates signal branching to three major signaling pathways, the calcium, the mitogen-activated protein kinase (MAPK) kinase and the nuclear factor NF-kappa-B (NF-kB) pathways, leading to the mobilization of transcription factors that are critical for gene expression and essential for T cell growth and differentiation. The T cell repertoire is generated in the thymus, by V-(D)-J rearrangement. This repertoire is then shaped by intrathymic selection events to generate a peripheral T cell pool of self-MH restricted, non-autoaggressive T cells. Post-thymic interaction of alpha-beta TR with the pMH complexes shapes TR structural and functional avidity. In Homo sapiens (Human), this protein is Probable non-functional T cell receptor beta variable 23-1.